Consider the following 84-residue polypeptide: Figainin 2 (84 aa).

An N-terminal signal peptide occupies residues M1–C22. Basic and acidic residues predominate over residues E23–E39. The tract at residues E23–K53 is disordered. The propeptide occupies E23–E54. Acidic residues predominate over residues E40 to N49.

In terms of tissue distribution, expressed by the skin glands.

The protein resides in the secreted. In terms of biological role, antimicrobial peptide that displays antibacterial, antiprotozoal, and antiviral activity. Exhibits antibacterial activity against the Gram-positive bacteria S.epidermidis ATCC 12228 (MIC=4 uM), E.casseliflavus ATCC 700327 (MIC=4 uM), S.aureus ATCC 25923 (MIC=8 uM) and E.faecalis ATCC 29212 (MIC=8 uM), and the Gram-negative bacteria E.coli ATCC 25922 (MIC=8 uM), K.pneumoniae ATCC 13883 (MIC=8 uM), the multi-resistant clinical isolate strain K.pneumoniae carbapanemase (KPC) MR (MIC=16 uM), and P.aeruginosa ATCC 27853 (MIC=32 uM). Displays antiprotozoal activity against the epimastigote form of T.cruzi (IC(50)=6.32 uM). Does not show antimicrobial against the fungi C.albicans ATCC 90028 and C.parapsilosis ATCC 22019. Displays antiviral activity against the human viruses chikungunya (EC(50)=17.9 uM), Dengue serotype 4 (EC(50)=20.8 uM) and Yellow Fever (EC(50)=21.8 uM). Shows moderate cytolytic activity against human erythrocytes (HC(50)=48.9 uM), and activates the oxidative burst in human neutrophils. Also displays anti-proliferative effects against MCF-7 breast cancer cells (IC(50)=15.3 uM) and B16F10 murine melanoma cells (IC(50)=12.8 uM). In Boana raniceps (Chaco tree frog), this protein is Figainin 2.